We begin with the raw amino-acid sequence, 76 residues long: Sec-independent protein translocase protein TatA (76 aa).

The chain crosses the membrane as a helical span at residues methionine 1 to glycine 21. Residues methionine 43–serine 76 are disordered. Basic and acidic residues predominate over residues aspartate 50–serine 76.

Belongs to the TatA/E family. In terms of assembly, the Tat system comprises two distinct complexes: a TatABC complex, containing multiple copies of TatA, TatB and TatC subunits, and a separate TatA complex, containing only TatA subunits. Substrates initially bind to the TatABC complex, which probably triggers association of the separate TatA complex to form the active translocon.

The protein resides in the cell inner membrane. Part of the twin-arginine translocation (Tat) system that transports large folded proteins containing a characteristic twin-arginine motif in their signal peptide across membranes. TatA could form the protein-conducting channel of the Tat system. This Brucella anthropi (strain ATCC 49188 / DSM 6882 / CCUG 24695 / JCM 21032 / LMG 3331 / NBRC 15819 / NCTC 12168 / Alc 37) (Ochrobactrum anthropi) protein is Sec-independent protein translocase protein TatA.